Here is a 238-residue protein sequence, read N- to C-terminus: Ubiquinone biosynthesis O-methyltransferase (238 aa).

S-adenosyl-L-methionine contacts are provided by Arg36, Gly56, Asp77, and Met125.

It belongs to the methyltransferase superfamily. UbiG/COQ3 family.

The catalysed reaction is a 3-demethylubiquinol + S-adenosyl-L-methionine = a ubiquinol + S-adenosyl-L-homocysteine + H(+). It carries out the reaction a 3-(all-trans-polyprenyl)benzene-1,2-diol + S-adenosyl-L-methionine = a 2-methoxy-6-(all-trans-polyprenyl)phenol + S-adenosyl-L-homocysteine + H(+). Its pathway is cofactor biosynthesis; ubiquinone biosynthesis. Functionally, O-methyltransferase that catalyzes the 2 O-methylation steps in the ubiquinone biosynthetic pathway. The sequence is that of Ubiquinone biosynthesis O-methyltransferase from Histophilus somni (strain 2336) (Haemophilus somnus).